The primary structure comprises 67 residues: Large ribosomal subunit protein bL35 (67 aa).

The protein belongs to the bacterial ribosomal protein bL35 family.

This is Large ribosomal subunit protein bL35 from Anaeromyxobacter sp. (strain Fw109-5).